Here is a 583-residue protein sequence, read N- to C-terminus: 2-succinyl-5-enolpyruvyl-6-hydroxy-3-cyclohexene-1-carboxylate synthase (583 aa).

The protein belongs to the TPP enzyme family. MenD subfamily. Homodimer. It depends on Mg(2+) as a cofactor. Mn(2+) is required as a cofactor. The cofactor is thiamine diphosphate.

The enzyme catalyses isochorismate + 2-oxoglutarate + H(+) = 5-enolpyruvoyl-6-hydroxy-2-succinyl-cyclohex-3-ene-1-carboxylate + CO2. The protein operates within quinol/quinone metabolism; 1,4-dihydroxy-2-naphthoate biosynthesis; 1,4-dihydroxy-2-naphthoate from chorismate: step 2/7. It functions in the pathway cofactor biosynthesis; phylloquinone biosynthesis. Its function is as follows. Catalyzes the thiamine diphosphate-dependent decarboxylation of 2-oxoglutarate and the subsequent addition of the resulting succinic semialdehyde-thiamine pyrophosphate anion to isochorismate to yield 2-succinyl-5-enolpyruvyl-6-hydroxy-3-cyclohexene-1-carboxylate (SEPHCHC). This Trichormus variabilis (strain ATCC 29413 / PCC 7937) (Anabaena variabilis) protein is 2-succinyl-5-enolpyruvyl-6-hydroxy-3-cyclohexene-1-carboxylate synthase.